The sequence spans 344 residues: tRNA N6-adenosine threonylcarbamoyltransferase (344 aa).

Fe cation-binding residues include H112 and H116. Substrate-binding positions include 134 to 138 (LASGG), D167, G180, and N280. Residue D308 participates in Fe cation binding.

This sequence belongs to the KAE1 / TsaD family. The cofactor is Fe(2+).

It is found in the cytoplasm. It catalyses the reaction L-threonylcarbamoyladenylate + adenosine(37) in tRNA = N(6)-L-threonylcarbamoyladenosine(37) in tRNA + AMP + H(+). Required for the formation of a threonylcarbamoyl group on adenosine at position 37 (t(6)A37) in tRNAs that read codons beginning with adenine. Is involved in the transfer of the threonylcarbamoyl moiety of threonylcarbamoyl-AMP (TC-AMP) to the N6 group of A37, together with TsaE and TsaB. TsaD likely plays a direct catalytic role in this reaction. This chain is tRNA N6-adenosine threonylcarbamoyltransferase, found in Rickettsia massiliae (strain Mtu5).